Here is a 75-residue protein sequence, read N- to C-terminus: Beta-defensin 30 (75 aa).

The N-terminal stretch at Met-1–Ser-22 is a signal peptide. Cystine bridges form between Cys-35–Cys-62, Cys-42–Cys-56, and Cys-46–Cys-63.

This sequence belongs to the beta-defensin family.

It is found in the secreted. Functionally, has antibacterial activity. This Rattus norvegicus (Rat) protein is Beta-defensin 30 (Defb30).